We begin with the raw amino-acid sequence, 504 residues long: Peptidyl-prolyl cis-trans isomerase CYP57 (504 aa).

Position 2 is an N-acetylserine (serine 2). A PPIase cyclophilin-type domain is found at 16-167 (IVNTTHGPID…DPAPKILSVE (152 aa)). Residues 204–274 (NLLSFGEEAE…AKKEAAQKDK (71 aa)) adopt a coiled-coil conformation. Composition is skewed to basic and acidic residues over residues 237–275 (RLLK…KDKS), 344–354 (EDEKPRMEKLS), and 364–374 (AKAEHMEKGDT). Disordered regions lie at residues 237 to 374 (RLLK…KGDT), 416 to 441 (AKPF…KEED), and 482 to 504 (EKFN…KSLA). Polar residues predominate over residues 416 to 434 (AKPFTSSNEPVVLTSSSEP). A compositionally biased stretch (basic and acidic residues) spans 494 to 504 (REREWSGKSLA).

It belongs to the cyclophilin-type PPIase family. In terms of tissue distribution, ubiquitous.

The protein localises to the nucleus. The protein resides in the cytoplasm. The enzyme catalyses [protein]-peptidylproline (omega=180) = [protein]-peptidylproline (omega=0). Functionally, PPIases accelerate the folding of proteins. It catalyzes the cis-trans isomerization of proline imidic peptide bonds in oligopeptides. Involved in plant response to pathogen infection by increasing PAD4 expression in absence of EDS1 up-regulation. The protein is Peptidyl-prolyl cis-trans isomerase CYP57 (CYP57) of Arabidopsis thaliana (Mouse-ear cress).